The chain runs to 333 residues: Protein farnesyltransferase/geranylgeranyltransferase type-1 subunit alpha (333 aa).

5 PFTA repeats span residues 61–95, 96–130, 132–166, 167–200, and 207–241; these read LSSR…SLKV, DLHV…KLGP, ARNS…NLGG, WEDE…RSPV, and MRES…DEST.

The protein belongs to the protein prenyltransferase subunit alpha family. As to quaternary structure, heterodimer of FTA and FTB (farnesyltransferase). Heterodimer of an alpha and a beta subunit. Mg(2+) is required as a cofactor.

It catalyses the reaction L-cysteinyl-[protein] + (2E,6E)-farnesyl diphosphate = S-(2E,6E)-farnesyl-L-cysteinyl-[protein] + diphosphate. The catalysed reaction is geranylgeranyl diphosphate + L-cysteinyl-[protein] = S-geranylgeranyl-L-cysteinyl-[protein] + diphosphate. Its function is as follows. Essential subunit of both the farnesyltransferase and the geranylgeranyltransferase complex. Contributes to the transfer of a farnesyl or geranylgeranyl moiety from farnesyl or geranylgeranyl diphosphate to a cysteine at the fourth position from the C-terminus of several proteins having the C-terminal sequence Cys-aliphatic-aliphatic-X. In Pisum sativum (Garden pea), this protein is Protein farnesyltransferase/geranylgeranyltransferase type-1 subunit alpha (FTA).